Here is a 487-residue protein sequence, read N- to C-terminus: Glutamate--tRNA ligase (487 aa).

The 'HIGH' region signature appears at P12 to N22. The 'KMSKS' region signature appears at K249–R253. K252 lines the ATP pocket.

Belongs to the class-I aminoacyl-tRNA synthetase family. Glutamate--tRNA ligase type 1 subfamily. In terms of assembly, monomer.

It is found in the cytoplasm. It catalyses the reaction tRNA(Glu) + L-glutamate + ATP = L-glutamyl-tRNA(Glu) + AMP + diphosphate. Its function is as follows. Catalyzes the attachment of glutamate to tRNA(Glu) in a two-step reaction: glutamate is first activated by ATP to form Glu-AMP and then transferred to the acceptor end of tRNA(Glu). The polypeptide is Glutamate--tRNA ligase (Clostridium novyi (strain NT)).